A 357-amino-acid chain; its full sequence is Neutral protease 2 homolog BDCG_00922 (357 aa).

The first 19 residues, 1–19 (MRSPQSILAIVAFATTAIA), serve as a signal peptide directing secretion. Residues 20–182 (GVVPSTEKRA…FASLNQFSKR (163 aa)) constitute a propeptide that is removed on maturation. Cystine bridges form between Cys-188–Cys-259, Cys-266–Cys-284, and Cys-297–Cys-357. His-308 lines the Zn(2+) pocket. Residue Glu-309 is part of the active site. Zn(2+) contacts are provided by His-312 and Asp-323.

This sequence belongs to the peptidase M35 family. Zn(2+) is required as a cofactor.

It localises to the secreted. It catalyses the reaction Preferential cleavage of bonds with hydrophobic residues in P1'. Also 3-Asn-|-Gln-4 and 8-Gly-|-Ser-9 bonds in insulin B chain.. Functionally, secreted metalloproteinase that allows assimilation of proteinaceous substrates. Shows high activities on basic nuclear substrates such as histone and protamine. In Ajellomyces dermatitidis (strain ER-3 / ATCC MYA-2586) (Blastomyces dermatitidis), this protein is Neutral protease 2 homolog BDCG_00922.